The following is a 189-amino-acid chain: Prostaglandin-H2 D-isomerase (189 aa).

An N-terminal signal peptide occupies residues 1–24 (MAALRMLWMGLVLLGLLGFPQTPA). Pyrrolidone carboxylic acid is present on Gln25. N-linked (GlcNAc...) asparagine glycosylation is present at Asn51. Catalysis depends on Cys65, which acts as the Nucleophile. N-linked (GlcNAc...) asparagine glycosylation occurs at Asn78. Cys89 and Cys186 are oxidised to a cystine.

The protein belongs to the calycin superfamily. Lipocalin family. As to quaternary structure, monomer. In terms of tissue distribution, abundant in the brain and CNS, where it is expressed in tissues of the blood-brain barrier and secreted into the cerebro-spinal fluid. In the male reproductive system, it is expressed in the testis, efferent ducts and epididymis, and is secreted into the seminal fluid. In the eye, it is expressed in the pigmented epithelium of the retina and the nonpigmented epithelium of the ciliary body, and secreted into the aqueous humor. Low levels detected in various tissue fluids such as serum, normal urine, ascitic fluid and tear fluid. Also found in a number of other organs including the ear, heart and lung.

Its subcellular location is the rough endoplasmic reticulum. The protein localises to the nucleus membrane. The protein resides in the golgi apparatus. It localises to the cytoplasm. It is found in the perinuclear region. Its subcellular location is the secreted. It carries out the reaction prostaglandin H2 = prostaglandin D2. Catalyzes the conversion of PGH2 to PGD2, a prostaglandin involved in smooth muscle contraction/relaxation and a potent inhibitor of platelet aggregation. Involved in a variety of CNS functions, such as sedation, NREM sleep and PGE2-induced allodynia, and may have an anti-apoptotic role in oligodendrocytes. Binds small non-substrate lipophilic molecules, including biliverdin, bilirubin, retinal, retinoic acid and thyroid hormone, and may act as a scavenger for harmful hydrophobic molecules and as a secretory retinoid and thyroid hormone transporter. Possibly involved in development and maintenance of the blood-brain, blood-retina, blood-aqueous humor and blood-testis barrier. It is likely to play important roles in both maturation and maintenance of the central nervous system and male reproductive system. Involved in PLA2G3-dependent maturation of mast cells. PLA2G3 is secreted by immature mast cells and acts on nearby fibroblasts upstream to PTDGS to synthesize PGD2, which in turn promotes mast cell maturation and degranulation via PTGDR. In Mus musculus (Mouse), this protein is Prostaglandin-H2 D-isomerase (Ptgds).